We begin with the raw amino-acid sequence, 102 residues long: Defensin (102 aa).

An N-terminal signal peptide occupies residues 1–25 (MKCATIVCTIAVVLAATLLNGSVQA). Positions 26–62 (APQEEAALSGGANLNTLLDELPEETHHAALENYRAKR) are excised as a propeptide. Intrachain disulfides connect C65–C92, C78–C98, and C82–C100.

This sequence belongs to the invertebrate defensin family. Type 1 subfamily.

It is found in the secreted. Responsible for the anti Gram-positive activity of immune hemolymph. This is Defensin (Def1) from Anopheles gambiae (African malaria mosquito).